The sequence spans 82 residues: Small ribosomal subunit protein uS15 (82 aa).

It belongs to the universal ribosomal protein uS15 family. In terms of assembly, part of the 30S ribosomal subunit. Forms a bridge to the 50S subunit in the 70S ribosome, contacting the 23S rRNA.

In terms of biological role, one of the primary rRNA binding proteins, it binds directly to 16S rRNA where it helps nucleate assembly of the platform of the 30S subunit by binding and bridging several RNA helices of the 16S rRNA. Functionally, forms an intersubunit bridge (bridge B4) with the 23S rRNA of the 50S subunit in the ribosome. The sequence is that of Small ribosomal subunit protein uS15 from Pelagibacter ubique (strain HTCC1062).